The primary structure comprises 440 residues: Chromosome partition protein MukF (440 aa).

Positions Leu-208–Ile-236 are leucine-zipper.

This sequence belongs to the MukF family. Interacts, and probably forms a ternary complex, with MukE and MukB via its C-terminal region. The complex formation is stimulated by calcium or magnesium. It is required for an interaction between MukE and MukB.

The protein resides in the cytoplasm. The protein localises to the nucleoid. Involved in chromosome condensation, segregation and cell cycle progression. May participate in facilitating chromosome segregation by condensation DNA from both sides of a centrally located replisome during cell division. Not required for mini-F plasmid partitioning. Probably acts via its interaction with MukB and MukE. Overexpression results in anucleate cells. It has a calcium binding activity. In Cronobacter sakazakii (strain ATCC BAA-894) (Enterobacter sakazakii), this protein is Chromosome partition protein MukF.